A 297-amino-acid chain; its full sequence is tRNA pseudouridine synthase B (297 aa).

Residue aspartate 44 is the Nucleophile of the active site.

Belongs to the pseudouridine synthase TruB family. Type 1 subfamily.

The enzyme catalyses uridine(55) in tRNA = pseudouridine(55) in tRNA. In terms of biological role, responsible for synthesis of pseudouridine from uracil-55 in the psi GC loop of transfer RNAs. In Corynebacterium efficiens (strain DSM 44549 / YS-314 / AJ 12310 / JCM 11189 / NBRC 100395), this protein is tRNA pseudouridine synthase B.